The chain runs to 1057 residues: Nuclear RNAi defective-3 protein (1057 aa).

Disordered regions lie at residues 1–89 (MDLL…GLSV) and 344–388 (LTNS…ERTV). Over residues 17-30 (STAKKPATSASSTP) the composition is skewed to low complexity. Composition is skewed to basic and acidic residues over residues 67 to 81 (PKRE…DPKR) and 356 to 388 (GGRE…ERTV). Positions 387-500 (TVSHYQRQFQ…YPMELMSILP (114 aa)) constitute a PAZ domain. Residues 677-1001 (GIIAEKRPDM…LAKRGHNNYK (325 aa)) enclose the Piwi domain.

Its subcellular location is the cytoplasm. The protein resides in the nucleus. In terms of biological role, transports small interfering RNAs (siRNAs) from the cytoplasm to the nucleus. Required for RNA interference (RNAi) in nuclei. Required for exogenous RNAi-induced H3K27 methylation. This is Nuclear RNAi defective-3 protein (nrde-3) from Caenorhabditis elegans.